Consider the following 78-residue polypeptide: Conotoxin Cal6.3a (78 aa).

The first 21 residues, 1 to 21 (MRFLHFLIVAVLLASFMESGA), serve as a signal peptide directing secretion. Residues 22 to 26 (MPRNP) constitute a propeptide that is removed on maturation. Disulfide bonds link Cys-38-Cys-49, Cys-41-Cys-53, and Cys-48-Cys-56. Gln-76 is modified (glutamine amide).

In terms of tissue distribution, expressed by the venom duct.

It is found in the secreted. Its function is as follows. Probable neurotoxin with unknown target. Possibly targets ion channels. This Californiconus californicus (California cone) protein is Conotoxin Cal6.3a.